The chain runs to 422 residues: Probable FBD-associated F-box protein At1g32375 (422 aa).

The 53-residue stretch at 1 to 53 (MDKLSQLPEALLVRILSLLSAKDVVSTMVLSKRWQFLWMLVPKLIYDDSYQAI) folds into the F-box domain. An FBD domain is found at 342 to 392 (CWNEPSAVPECLLTSLETLEWVKYEGTEEEKEVAAFILRSGSCLKKVTISS).

In Arabidopsis thaliana (Mouse-ear cress), this protein is Probable FBD-associated F-box protein At1g32375.